A 61-amino-acid chain; its full sequence is Large ribosomal subunit protein bL32 (61 aa).

Positions M1–L22 are enriched in basic residues. The segment at M1–Y27 is disordered.

It belongs to the bacterial ribosomal protein bL32 family.

The protein is Large ribosomal subunit protein bL32 of Rhodospirillum rubrum (strain ATCC 11170 / ATH 1.1.1 / DSM 467 / LMG 4362 / NCIMB 8255 / S1).